The primary structure comprises 76 residues: ATP synthase subunit 9, mitochondrial (76 aa).

The next 2 helical transmembrane spans lie at 11–31 and 53–73; these read IGAG…GIVF and ILGF…AFLI.

Belongs to the ATPase C chain family. In terms of assembly, F-type ATPases have 2 components, CF(1) - the catalytic core - and CF(0) - the membrane proton channel. CF(1) has five subunits: alpha(3), beta(3), gamma(1), delta(1), epsilon(1). CF(0) has three main subunits: a, b and c.

The protein localises to the mitochondrion membrane. Functionally, this protein is one of the chains of the nonenzymatic membrane component (F0) of mitochondrial ATPase. The chain is ATP synthase subunit 9, mitochondrial (ATP9) from Chondrus crispus (Carrageen Irish moss).